A 425-amino-acid chain; its full sequence is Glucose-1-phosphate adenylyltransferase (425 aa).

Residues tyrosine 114, glycine 179, 194-195, and serine 212 each bind alpha-D-glucose 1-phosphate; that span reads EK.

This sequence belongs to the bacterial/plant glucose-1-phosphate adenylyltransferase family. Homotetramer.

The catalysed reaction is alpha-D-glucose 1-phosphate + ATP + H(+) = ADP-alpha-D-glucose + diphosphate. It participates in glycan biosynthesis; glycogen biosynthesis. Its function is as follows. Involved in the biosynthesis of ADP-glucose, a building block required for the elongation reactions to produce glycogen. Catalyzes the reaction between ATP and alpha-D-glucose 1-phosphate (G1P) to produce pyrophosphate and ADP-Glc. The polypeptide is Glucose-1-phosphate adenylyltransferase (Pectobacterium carotovorum subsp. carotovorum (strain PC1)).